Here is a 68-residue protein sequence, read N- to C-terminus: Protein DsrB (68 aa).

The protein belongs to the DsrB family.

The chain is Protein DsrB from Sodalis glossinidius (strain morsitans).